Reading from the N-terminus, the 468-residue chain is Argininosuccinate lyase (468 aa).

The protein belongs to the lyase 1 family. Argininosuccinate lyase subfamily.

Its subcellular location is the cytoplasm. It catalyses the reaction 2-(N(omega)-L-arginino)succinate = fumarate + L-arginine. It functions in the pathway amino-acid biosynthesis; L-arginine biosynthesis; L-arginine from L-ornithine and carbamoyl phosphate: step 3/3. The sequence is that of Argininosuccinate lyase from Paraburkholderia phytofirmans (strain DSM 17436 / LMG 22146 / PsJN) (Burkholderia phytofirmans).